The following is a 146-amino-acid chain: MRVLVQAEPFEFGAEAQTFADGAAGAGAIVTFTGLVRDLSGALEAMEIEHYPGMTERAIAAIAEEARQRWHLIDALVIHRHGRLGPSEPIMMVATAAAHRAEAFAAAEFLMDYLKSRAPFWKKEVTAGGADWVAAKEADEAALGRW.

Substrate-binding positions include 35–37 (LVR), 99–100 (HR), Lys115, and 122–124 (KKE).

This sequence belongs to the MoaE family. In terms of assembly, heterotetramer of 2 MoaD subunits and 2 MoaE subunits. Also stable as homodimer. The enzyme changes between these two forms during catalysis.

It catalyses the reaction 2 [molybdopterin-synthase sulfur-carrier protein]-C-terminal-Gly-aminoethanethioate + cyclic pyranopterin phosphate + H2O = molybdopterin + 2 [molybdopterin-synthase sulfur-carrier protein]-C-terminal Gly-Gly + 2 H(+). It participates in cofactor biosynthesis; molybdopterin biosynthesis. Converts molybdopterin precursor Z into molybdopterin. This requires the incorporation of two sulfur atoms into precursor Z to generate a dithiolene group. The sulfur is provided by MoaD. This Cereibacter sphaeroides (strain ATCC 17023 / DSM 158 / JCM 6121 / CCUG 31486 / LMG 2827 / NBRC 12203 / NCIMB 8253 / ATH 2.4.1.) (Rhodobacter sphaeroides) protein is Molybdopterin synthase catalytic subunit (moaE).